Consider the following 872-residue polypeptide: DNA mismatch repair protein MutS (872 aa).

602–609 (GPNMSGKS) is an ATP binding site.

It belongs to the DNA mismatch repair MutS family.

In terms of biological role, this protein is involved in the repair of mismatches in DNA. It is possible that it carries out the mismatch recognition step. This protein has a weak ATPase activity. The chain is DNA mismatch repair protein MutS from Staphylococcus aureus (strain MRSA252).